The following is a 178-amino-acid chain: Cytidylate kinase (178 aa).

7–15 provides a ligand contact to ATP; that stretch reads GLPGSGTTS.

The protein belongs to the cytidylate kinase family. Type 2 subfamily.

The protein resides in the cytoplasm. The enzyme catalyses CMP + ATP = CDP + ADP. The catalysed reaction is dCMP + ATP = dCDP + ADP. The sequence is that of Cytidylate kinase from Methanospirillum hungatei JF-1 (strain ATCC 27890 / DSM 864 / NBRC 100397 / JF-1).